A 995-amino-acid polypeptide reads, in one-letter code: KN motif and ankyrin repeat domain-containing protein 4 (995 aa).

Disordered regions lie at residues 1 to 29 and 68 to 127; these read MEKTDAKDQSSQGDEEKDPPKSHPYSVET and TLPR…EVSY. The segment covering 101–124 has biased composition (polar residues); the sequence is LGTQEQNQSPPLGNAPQASTSRSE. Residues 343–404 adopt a coiled-coil conformation; it reads SSLKQQVSAL…EGQFHQENAK (62 aa). 5 disordered regions span residues 443–467, 503–558, 617–642, 663–705, and 721–740; these read ESWGHRGEENGLLWGPDGHKQGNQS, EAGT…PTDA, QAHPPKEPPASSSSPPVEISPSTSLK, LQFV…PDHK, and PEGTCHAAQESGPGEEVPHS. The segment covering 511–523 has biased composition (gly residues); sequence GPQGGTRGAGGFL. The segment covering 526–549 has biased composition (basic and acidic residues); sequence SDRKTPPAGREETSSNLPGKEHPG. Residues 625–640 are compositionally biased toward low complexity; sequence PASSSSPPVEISPSTS. Positions 680–693 are enriched in acidic residues; that stretch reads TSGEDSTPEDLSDS. Residues 694-705 show a composition bias toward basic and acidic residues; sequence EAEKKCDGPDHK. ANK repeat units lie at residues 823–853, 862–890, 895–924, 928–958, and 962–992; these read NGNTALHYSVSHSNFSIVKLLLETGVCNVDH, VMITPLASAETNEDMAVVWKLLREGNVNI, GGQTALMLGVSHDREDMVQALLSCQADVNL, DGSSALMVACHHGNVDLVRLLLAHPACDSSL, and AGRTALSIALKSPTHMEIAGLLRAHAEQGRS.

In terms of tissue distribution, strongly expressed in colon, liver, lung, skeletal muscle and kidney.

The protein resides in the cytoplasm. In terms of biological role, may be involved in the control of cytoskeleton formation by regulating actin polymerization. The sequence is that of KN motif and ankyrin repeat domain-containing protein 4 (KANK4) from Homo sapiens (Human).